A 55-amino-acid chain; its full sequence is Protein SOX-19 (55 aa).

Residues 1-55 (MVWSQIERRKIMEQWPDMHNAEISKRLGKRWKLLPDYEKIPFIKEAERLRLKHMA) constitute a DNA-binding region (HMG box).

Its subcellular location is the nucleus. This Mus musculus (Mouse) protein is Protein SOX-19 (Sox19).